The primary structure comprises 80 residues: Acyl carrier protein (80 aa).

Residues 4–79 (QEIFEKVKAV…DAVEYIKAKL (76 aa)) enclose the Carrier domain. Residue Ser39 is modified to O-(pantetheine 4'-phosphoryl)serine.

It belongs to the acyl carrier protein (ACP) family. In terms of processing, 4'-phosphopantetheine is transferred from CoA to a specific serine of apo-ACP by AcpS. This modification is essential for activity because fatty acids are bound in thioester linkage to the sulfhydryl of the prosthetic group.

The protein localises to the cytoplasm. The protein operates within lipid metabolism; fatty acid biosynthesis. Functionally, carrier of the growing fatty acid chain in fatty acid biosynthesis. This is Acyl carrier protein from Thermus thermophilus (strain ATCC BAA-163 / DSM 7039 / HB27).